Consider the following 463-residue polypeptide: Interleukin enhancer-binding factor 2 (463 aa).

An Asymmetric dimethylarginine; alternate modification is found at Arg-94. At Arg-94 the chain carries Omega-N-methylarginine; alternate. The region spanning 108-444 (RHILAYDWLA…PEKKEGEEEE (337 aa)) is the DZF domain. Arg-145 is modified (omega-N-methylarginine). Lys-166 is covalently cross-linked (Glycyl lysine isopeptide (Lys-Gly) (interchain with G-Cter in ubiquitin)). A phosphoserine mark is found at Ser-173 and Ser-189. Glycyl lysine isopeptide (Lys-Gly) (interchain with G-Cter in SUMO2) cross-links involve residues Lys-259 and Lys-437. Positions 424–463 (VTPSEKAYEKPPEKKEGEEEEENTEEPPQGEEEESMETQE) are disordered. The segment covering 429-440 (KAYEKPPEKKEG) has biased composition (basic and acidic residues). Over residues 441-463 (EEEEENTEEPPQGEEEESMETQE) the composition is skewed to acidic residues. Thr-461 is modified (phosphothreonine).

Forms heterodimers with ILF3. ILF2-ILF3 heterodimers may also bind to PRKDC/XRCC7: this may stabilize the interaction of PRKDC/XRCC7 and the heterodimeric complex of G22P1/KU70 and XRCC5/KU80. Forms a complex with ILF3, YLPM1, KHDRBS1, RBMX, NCOA5 and PPP1CA. Identified in a IGF2BP1-dependent mRNP granule complex containing untranslated mRNAs. Interacts with IGF2BP1. Interacts with CRBN; this interaction promotes ubiquitination and subsequent degradation of ILF2. Post-translationally, ubiquitinated at Lys-166 by CRBN with polyubiquitin chains by the CUL4-RING E3 ligase (CRL4-CRBN) and then degraded by the proteasome.

It localises to the nucleus. Its subcellular location is the nucleolus. The protein localises to the cytoplasm. Its function is as follows. Chromatin-interacting protein that forms a stable heterodimer with interleukin enhancer-binding factor 3/ILF3 and plays a role in several biological processes including transcription, innate immunity or cell growth. Essential for the efficient reshuttling of ILF3 (isoform 1 and isoform 2) into the nucleus. Together with ILF3, forms an RNA-binding complex that is required for mitotic progression and cytokinesis by regulating the expression of a cluster of mitotic genes. Mechanistically, competes with STAU1/STAU2-mediated mRNA decay. Plays also a role in the inhibition of various viruses including Japanese encephalitis virus or enterovirus 71. This is Interleukin enhancer-binding factor 2 (Ilf2) from Rattus norvegicus (Rat).